The primary structure comprises 476 residues: MDFEAVIGLEVHAELSTNTKIYCGCTTEFGGQPNTHVCPICLGLPGSLPQLNKRVVEYGIKAGLALNCSINKVCRMDRKNYFYPDCPKNYQITQDEVPICRDGYIEIELENGEKKKIGIERIHMEEDAGKLLHTNAGTLVDYNRAGVPLIEIVSRPDIRTPEEATKYLEKLKSILSSIEVSDCKMEQGSLRCDGNISVMPKGSEKFGVRSEIKNMNSFKALEKALSYEYDRHVEAVTKGEILEQETRRWDEANSVTVLMRSKEKANDYRYFPEGDLVTLNISDEWIEEVRKTIPELPHEKAERFVNEFRIPKYDAMVLTLTMDMAKFFEETALKSEDAKATSNWLMGDISRLMNEKTIEVKDLKFNPEQLAELIKLINAGTISNNIGKKVLDDMFKSGKSPKDIVEEKGLVQNNDEGAILEVVKKIIENNPQSIEDFKNGKKRALGFLVGLVMKETKGKANPQIVNKLVSEEANKM.

This sequence belongs to the GatB/GatE family. GatB subfamily. As to quaternary structure, heterotrimer of A, B and C subunits.

It carries out the reaction L-glutamyl-tRNA(Gln) + L-glutamine + ATP + H2O = L-glutaminyl-tRNA(Gln) + L-glutamate + ADP + phosphate + H(+). The catalysed reaction is L-aspartyl-tRNA(Asn) + L-glutamine + ATP + H2O = L-asparaginyl-tRNA(Asn) + L-glutamate + ADP + phosphate + 2 H(+). Its function is as follows. Allows the formation of correctly charged Asn-tRNA(Asn) or Gln-tRNA(Gln) through the transamidation of misacylated Asp-tRNA(Asn) or Glu-tRNA(Gln) in organisms which lack either or both of asparaginyl-tRNA or glutaminyl-tRNA synthetases. The reaction takes place in the presence of glutamine and ATP through an activated phospho-Asp-tRNA(Asn) or phospho-Glu-tRNA(Gln). This chain is Aspartyl/glutamyl-tRNA(Asn/Gln) amidotransferase subunit B, found in Clostridium botulinum (strain Langeland / NCTC 10281 / Type F).